Reading from the N-terminus, the 389-residue chain is Methylthioribose-1-phosphate isomerase (389 aa).

Asp258 serves as the catalytic Proton donor.

It belongs to the eIF-2B alpha/beta/delta subunits family. MtnA subfamily.

It is found in the cytoplasm. It localises to the nucleus. The catalysed reaction is 5-(methylsulfanyl)-alpha-D-ribose 1-phosphate = 5-(methylsulfanyl)-D-ribulose 1-phosphate. Its pathway is amino-acid biosynthesis; L-methionine biosynthesis via salvage pathway; L-methionine from S-methyl-5-thio-alpha-D-ribose 1-phosphate: step 1/6. In terms of biological role, catalyzes the interconversion of methylthioribose-1-phosphate (MTR-1-P) into methylthioribulose-1-phosphate (MTRu-1-P). In Chaetomium globosum (strain ATCC 6205 / CBS 148.51 / DSM 1962 / NBRC 6347 / NRRL 1970) (Soil fungus), this protein is Methylthioribose-1-phosphate isomerase.